Reading from the N-terminus, the 671-residue chain is DNA ligase (671 aa).

NAD(+)-binding positions include 34 to 38 (DAEYD), 83 to 84 (SL), and Glu115. Residue Lys117 is the N6-AMP-lysine intermediate of the active site. NAD(+) contacts are provided by Arg138, Glu174, Lys291, and Lys315. 4 residues coordinate Zn(2+): Cys409, Cys412, Cys427, and Cys432. One can recognise a BRCT domain in the interval 589–671 (RSGGPLTGKS…LQMIDTLEEA (83 aa)).

This sequence belongs to the NAD-dependent DNA ligase family. LigA subfamily. The cofactor is Mg(2+). It depends on Mn(2+) as a cofactor.

It carries out the reaction NAD(+) + (deoxyribonucleotide)n-3'-hydroxyl + 5'-phospho-(deoxyribonucleotide)m = (deoxyribonucleotide)n+m + AMP + beta-nicotinamide D-nucleotide.. DNA ligase that catalyzes the formation of phosphodiester linkages between 5'-phosphoryl and 3'-hydroxyl groups in double-stranded DNA using NAD as a coenzyme and as the energy source for the reaction. It is essential for DNA replication and repair of damaged DNA. This is DNA ligase from Syntrophotalea carbinolica (strain DSM 2380 / NBRC 103641 / GraBd1) (Pelobacter carbinolicus).